A 450-amino-acid polypeptide reads, in one-letter code: Protein W (450 aa).

A disordered region spans residues 53–92 (SGESEQVEGGMSKDDGDVERRNLEDLSSTSPTDGTIGKRV). Residues 63 to 76 (MSKDDGDVERRNLE) are compositionally biased toward basic and acidic residues. A Phosphoserine; by host modification is found at Ser-257. A disordered region spans residues 265–324 (ISPEDEEPSSVGGKPNESIGRTIEGQSIRDNLQAKDNKSTDVPGAGPKDSAVKEEPPQKR). Ser-350 is subject to Phosphoserine; by host. Disordered stretches follow at residues 384–403 (VQTA…RGIP) and 429–450 (PGMF…RMSN). Over residues 438–450 (TKKARVSMRRMSN) the composition is skewed to basic residues. A Nuclear localization signal motif is present at residues 439-442 (KKAR).

As to quaternary structure, interacts with host STAT1.

It localises to the host nucleus. Prevent the establishment of cellular antiviral state by blocking the interferon-alpha/beta (IFN-alpha/beta). Interacts with host STAT1 protein in the nucleus, blocking it's phosphorylation by IFN-alpha/beta. Also blocks antiviral state induced by Toll-like receptor 3/TLR3 binding to dsRNA. The sequence is that of Protein W (P/V/C) from Cynopterus brachyotis (Lesser short-nosed fruit bat).